Consider the following 294-residue polypeptide: 4-hydroxy-tetrahydrodipicolinate synthase (294 aa).

Thr48 lines the pyruvate pocket. The active-site Proton donor/acceptor is Tyr136. Residue Lys164 is the Schiff-base intermediate with substrate of the active site. Val206 provides a ligand contact to pyruvate.

This sequence belongs to the DapA family. As to quaternary structure, homotetramer; dimer of dimers.

The protein resides in the cytoplasm. The catalysed reaction is L-aspartate 4-semialdehyde + pyruvate = (2S,4S)-4-hydroxy-2,3,4,5-tetrahydrodipicolinate + H2O + H(+). Its pathway is amino-acid biosynthesis; L-lysine biosynthesis via DAP pathway; (S)-tetrahydrodipicolinate from L-aspartate: step 3/4. Functionally, catalyzes the condensation of (S)-aspartate-beta-semialdehyde [(S)-ASA] and pyruvate to 4-hydroxy-tetrahydrodipicolinate (HTPA). The polypeptide is 4-hydroxy-tetrahydrodipicolinate synthase (Desulforudis audaxviator (strain MP104C)).